A 398-amino-acid polypeptide reads, in one-letter code: Phosphoglycerate kinase (398 aa).

Substrate contacts are provided by residues 21 to 23 (DFN), arginine 36, 59 to 62 (HLGR), arginine 119, and arginine 157. ATP-binding positions include lysine 208, glycine 296, glutamate 327, and 354 to 357 (GGDS).

Belongs to the phosphoglycerate kinase family. As to quaternary structure, monomer.

The protein localises to the cytoplasm. The enzyme catalyses (2R)-3-phosphoglycerate + ATP = (2R)-3-phospho-glyceroyl phosphate + ADP. It participates in carbohydrate degradation; glycolysis; pyruvate from D-glyceraldehyde 3-phosphate: step 2/5. This chain is Phosphoglycerate kinase, found in Lactococcus lactis subsp. cremoris (strain SK11).